The chain runs to 438 residues: Transposon Ty2-OR2 Gag polyprotein (438 aa).

Disordered stretches follow at residues 1–88 (MESQ…YQQH), 365–397 (NVSR…AKAH), and 419–438 (SSQY…TERI). 2 stretches are compositionally biased toward polar residues: residues 19 to 39 (ASVT…SASN) and 49 to 60 (KVNSQEETTPGT). The interval 295-397 (ENNINVSDRL…SSKPRAAKAH (103 aa)) is RNA-binding. The segment covering 369-381 (TSPNTTNTKVTTR) has biased composition (low complexity).

Homotrimer.

The protein localises to the cytoplasm. Capsid protein (CA) is the structural component of the virus-like particle (VLP), forming the shell that encapsulates the retrotransposons dimeric RNA genome. The particles are assembled from trimer-clustered units and there are holes in the capsid shells that allow for the diffusion of macromolecules. CA also has nucleocapsid-like chaperone activity, promoting primer tRNA(i)-Met annealing to the multipartite primer-binding site (PBS), dimerization of Ty2 RNA and initiation of reverse transcription. This Saccharomyces cerevisiae (strain ATCC 204508 / S288c) (Baker's yeast) protein is Transposon Ty2-OR2 Gag polyprotein (TY2A-OR2).